A 740-amino-acid chain; its full sequence is Phosphoribosylformylglycinamidine synthase subunit PurL (740 aa).

The active site involves histidine 50. The ATP site is built by tyrosine 53 and lysine 92. Residue glutamate 94 participates in Mg(2+) binding. Substrate-binding positions include 95 to 98 (SHNH) and arginine 117. Catalysis depends on histidine 96, which acts as the Proton acceptor. Aspartate 118 lines the Mg(2+) pocket. Residue glutamine 241 participates in substrate binding. Residue aspartate 269 coordinates Mg(2+). 313-315 (ESQ) lines the substrate pocket. ATP is bound by residues aspartate 495 and glycine 532. Position 533 (asparagine 533) interacts with Mg(2+). Serine 535 is a substrate binding site.

The protein belongs to the FGAMS family. In terms of assembly, monomer. Part of the FGAM synthase complex composed of 1 PurL, 1 PurQ and 2 PurS subunits.

It localises to the cytoplasm. The catalysed reaction is N(2)-formyl-N(1)-(5-phospho-beta-D-ribosyl)glycinamide + L-glutamine + ATP + H2O = 2-formamido-N(1)-(5-O-phospho-beta-D-ribosyl)acetamidine + L-glutamate + ADP + phosphate + H(+). Its pathway is purine metabolism; IMP biosynthesis via de novo pathway; 5-amino-1-(5-phospho-D-ribosyl)imidazole from N(2)-formyl-N(1)-(5-phospho-D-ribosyl)glycinamide: step 1/2. Part of the phosphoribosylformylglycinamidine synthase complex involved in the purines biosynthetic pathway. Catalyzes the ATP-dependent conversion of formylglycinamide ribonucleotide (FGAR) and glutamine to yield formylglycinamidine ribonucleotide (FGAM) and glutamate. The FGAM synthase complex is composed of three subunits. PurQ produces an ammonia molecule by converting glutamine to glutamate. PurL transfers the ammonia molecule to FGAR to form FGAM in an ATP-dependent manner. PurS interacts with PurQ and PurL and is thought to assist in the transfer of the ammonia molecule from PurQ to PurL. The polypeptide is Phosphoribosylformylglycinamidine synthase subunit PurL (Brucella abortus (strain S19)).